Here is a 321-residue protein sequence, read N- to C-terminus: MAHATSSAYEVKITLPGNLTRDEEDRLRCLTGTILMAPSLRRCLFLHDVDRNSYYVHGSEPDYATSLAAYRRRFPLLVTAVGRQELSAVSLSIGCPKGLNFRNTGPFQLLNGSNVSLIPPIGGRWRVELLSCGSVIEPAMTIPTEVGSELLGKILAGMTYEFCARNQIPADRPAEVYRVACDNKALDLTQAIRGGDSDLQDTMKTLFASVLFAMNEGVLQVMTLMPALLAGGNTNPFLNALLQMQSATRLSAQIFNPPTLPVHDPTGGARRYNVFDAFASWLTMSHRLGELFHMKPALKVVMFYSDVSAIDEGQTANAIVP.

This sequence belongs to the herpesviridae TRX2 protein family. Interacts with TRX1 and major capisd protein/MCP.

Its subcellular location is the virion. It localises to the host nucleus. Its function is as follows. Structural component of the T=16 icosahedral capsid. The capsid is composed of pentamers and hexamers of major capsid protein/MCP, which are linked together by heterotrimers called triplexes. These triplexes are formed by a single molecule of triplex protein 1/TRX1 and two copies of triplex protein 2/TRX2. Additionally, TRX1 is required for efficient transport of TRX2 to the nucleus, which is the site of capsid assembly. The protein is Triplex capsid protein 2 of Amazona oratrix (yellow-headed parrot).